Here is a 309-residue protein sequence, read N- to C-terminus: Metaxin-3 (309 aa).

Residues Met-274–His-309 are disordered. 2 stretches are compositionally biased toward polar residues: residues Arg-280–Ser-290 and Asn-300–His-309.

This sequence belongs to the metaxin family. Part of a large protein complex spanning both mitochondrial membranes termed the mitochondrial intermembrane space bridging (MIB) complex.

The protein localises to the mitochondrion. It localises to the mitochondrion outer membrane. Functionally, could function in transport of proteins into the mitochondrion. The chain is Metaxin-3 (mtx3) from Xenopus laevis (African clawed frog).